Reading from the N-terminus, the 57-residue chain is UPF0391 membrane protein Smed_4051 (57 aa).

The next 2 membrane-spanning stretches (helical) occupy residues 4–24 (WALIFFVISLIAGFLGFSGIS) and 33–53 (ILFYIAVIIFLVFLVLALAVG).

Belongs to the UPF0391 family.

The protein resides in the cell membrane. This chain is UPF0391 membrane protein Smed_4051, found in Sinorhizobium medicae (strain WSM419) (Ensifer medicae).